A 270-amino-acid polypeptide reads, in one-letter code: Phosphatidate cytidylyltransferase (270 aa).

7 helical membrane-spanning segments follow: residues 19–39 (LWLTWVGGVGFTLFSIAIGLA), 53–73 (TAFSRLFGWAWLIVTGILLIL), 76–96 (GALLTIGFLVAGCAILLVTQW), 101–121 (GWPAAGLFYAGFSALSLSLLR), 126–146 (FGFTTIVFLFAVVWSTDITAY), 183–203 (LVASLVAAPGGWGVPVLALLL), and 248–268 (ALLYLFGAIFAEPDVLSAIFF).

It belongs to the CDS family.

The protein localises to the cell inner membrane. It carries out the reaction a 1,2-diacyl-sn-glycero-3-phosphate + CTP + H(+) = a CDP-1,2-diacyl-sn-glycerol + diphosphate. The protein operates within phospholipid metabolism; CDP-diacylglycerol biosynthesis; CDP-diacylglycerol from sn-glycerol 3-phosphate: step 3/3. The protein is Phosphatidate cytidylyltransferase (cdsA) of Brucella abortus (strain 2308).